The chain runs to 475 residues: 3-isopropylmalate dehydratase large subunit (475 aa).

Positions 349, 409, and 412 each coordinate [4Fe-4S] cluster.

The protein belongs to the aconitase/IPM isomerase family. LeuC type 1 subfamily. Heterodimer of LeuC and LeuD. [4Fe-4S] cluster is required as a cofactor.

The enzyme catalyses (2R,3S)-3-isopropylmalate = (2S)-2-isopropylmalate. Its pathway is amino-acid biosynthesis; L-leucine biosynthesis; L-leucine from 3-methyl-2-oxobutanoate: step 2/4. Its function is as follows. Catalyzes the isomerization between 2-isopropylmalate and 3-isopropylmalate, via the formation of 2-isopropylmaleate. The chain is 3-isopropylmalate dehydratase large subunit from Cereibacter sphaeroides (strain ATCC 17029 / ATH 2.4.9) (Rhodobacter sphaeroides).